A 134-amino-acid chain; its full sequence is Alkaline proteinase inhibitor (134 aa).

Residues 1–26 (MVFAAWYLKFAFFVALAFSIIGGSMA) form the signal peptide. Cys-50 and Cys-73 are disulfide-bonded.

This sequence belongs to the protease inhibitor I38 family.

It is found in the periplasm. In terms of biological role, inhibitor of the alkaline protease. This Photorhabdus luminescens (Xenorhabdus luminescens) protein is Alkaline proteinase inhibitor (inh).